The chain runs to 219 residues: Ras-related protein Rab-3B (219 aa).

An N-acetylalanine modification is found at Ala-2. Positions 31, 32, 33, 34, 35, 36, 37, 49, and 53 each coordinate GTP. Thr-36 serves as a coordination point for Mg(2+). The Switch 1 signature appears at Asp-45–Asp-58. Residues Thr-54 and Asp-77 each contribute to the Mg(2+) site. The Switch 2 motif lies at Thr-78–Met-96. Gly-80 serves as a coordination point for GTP. Residue Thr-86 is modified to Phosphothreonine. 5 residues coordinate GTP: Asn-135, Lys-136, Asp-138, Ala-166, and Lys-167. Phosphoserine occurs at positions 188 and 190. S-geranylgeranyl cysteine attachment occurs at residues Cys-217 and Cys-219. Residue Cys-219 is modified to Cysteine methyl ester.

The protein belongs to the small GTPase superfamily. Rab family. Interacts with RIMS1, RIMS2, RPH3A and RPH3AL. The GTP-bound form interacts with GAS8/DRC4 (via coiled-coil domains). Interacts with GDI2, CHM and CHML; phosphorylation at Thr-86 disrupts these interactions. Interacts with MADD (via uDENN domain); the GTP-bound form is preferred for interaction. Requires Mg(2+) as cofactor. Post-translationally, phosphorylation of Thr-86 in the switch II region by LRRK2 prevents the association of RAB regulatory proteins, including CHM, CHML and RAB GDP dissociation inhibitor GDI2.

The protein localises to the cell membrane. It is found in the golgi apparatus. It catalyses the reaction GTP + H2O = GDP + phosphate + H(+). With respect to regulation, regulated by guanine nucleotide exchange factors (GEFs) which promote the exchange of bound GDP for free GTP. Regulated by GTPase activating proteins (GAPs) which increase the GTP hydrolysis activity. Inhibited by GDP dissociation inhibitors (GDIs) which prevent Rab-GDP dissociation. In terms of biological role, the small GTPases Rab are key regulators of intracellular membrane trafficking, from the formation of transport vesicles to their fusion with membranes. Rabs cycle between an inactive GDP-bound form and an active GTP-bound form that is able to recruit to membranes different sets of downstream effectors directly responsible for vesicle formation, movement, tethering and fusion. This Mesocricetus auratus (Golden hamster) protein is Ras-related protein Rab-3B (RAB3B).